The chain runs to 314 residues: Methionyl-tRNA formyltransferase (314 aa).

110–113 (SLLP) contacts (6S)-5,6,7,8-tetrahydrofolate.

Belongs to the Fmt family.

The catalysed reaction is L-methionyl-tRNA(fMet) + (6R)-10-formyltetrahydrofolate = N-formyl-L-methionyl-tRNA(fMet) + (6S)-5,6,7,8-tetrahydrofolate + H(+). In terms of biological role, attaches a formyl group to the free amino group of methionyl-tRNA(fMet). The formyl group appears to play a dual role in the initiator identity of N-formylmethionyl-tRNA by promoting its recognition by IF2 and preventing the misappropriation of this tRNA by the elongation apparatus. This is Methionyl-tRNA formyltransferase from Bacillus cereus (strain AH187).